The chain runs to 382 residues: POU domain, class 3, transcription factor 2-A (382 aa).

Disordered stretches follow at residues 69 to 136 (PWAT…SSNG), 150 to 206 (GMIN…TPTS), and 348 to 382 (EKRM…TSVQ). Over residues 122-136 (STGSTHLSSMASSNG) the composition is skewed to polar residues. Positions 165 to 178 (LRDSHDDHHGDHGH) are enriched in basic and acidic residues. The span at 179-194 (QQVSQAQQQHSQLQGG) shows a compositional bias: low complexity. In terms of domain architecture, POU-specific spans 201-275 (EDTPTSDDLE…LLNKWLEEAD (75 aa)). Positions 293-352 (KRKKRTSIEVSVKGALESHFLKCPKPSAPEITSLADSLQLEKEVVRVWFCNRRQKEKRMT) form a DNA-binding region, homeobox.

The protein belongs to the POU transcription factor family. Class-3 subfamily. Expressed in the developing brain and spinal cord. Also found in a restricted region of the auditory vesicle during development. In the adult, expression is restricted to the brain.

The protein localises to the nucleus. In terms of biological role, transcription factor that may be implicated in patterning of the central nervous system during early development. This Xenopus laevis (African clawed frog) protein is POU domain, class 3, transcription factor 2-A (pou3f2-a).